Here is a 117-residue protein sequence, read N- to C-terminus: Ribonuclease P protein component (117 aa).

It belongs to the RnpA family. As to quaternary structure, consists of a catalytic RNA component (M1 or rnpB) and a protein subunit.

It catalyses the reaction Endonucleolytic cleavage of RNA, removing 5'-extranucleotides from tRNA precursor.. Its function is as follows. RNaseP catalyzes the removal of the 5'-leader sequence from pre-tRNA to produce the mature 5'-terminus. It can also cleave other RNA substrates such as 4.5S RNA. The protein component plays an auxiliary but essential role in vivo by binding to the 5'-leader sequence and broadening the substrate specificity of the ribozyme. The protein is Ribonuclease P protein component of Aliivibrio fischeri (strain ATCC 700601 / ES114) (Vibrio fischeri).